The sequence spans 91 residues: Secretoglobin family 3A member 2 (91 aa).

The first 21 residues, 1–21, serve as a signal peptide directing secretion; the sequence is MKLVSIFLLVTIGICGYSATA.

The protein belongs to the secretoglobin family. UGRP subfamily. Homodimer; disulfide-linked. Monomer. Interacts with APOA1. Highly expressed in lung where it localizes to epithelial cells of the trachea, bronchus and bronchioles (at protein level). Expressed in club cells of the bronchioles. Also detected in the anterior and posterior lobes of the pituitary gland where it may localize to gonadotropic cells (at protein level). Not detected in other tissues tested.

The protein resides in the secreted. Secreted cytokine-like protein. Binds to the scavenger receptor MARCO. Can also bind to pathogens including the Gram-positive bacterium L.monocytogenes, the Gram-negative bacterium P.aeruginosa, and yeast. Strongly inhibits phospholipase A2 (PLA2G1B) activity. Seems to have anti-inflammatory effects in respiratory epithelium. Also has anti-fibrotic activity in lung. May play a role in fetal lung development and maturation. Promotes branching morphogenesis during early stages of lung development. In the pituitary, may inhibit production of follicle-stimulating hormone (FSH) and luteinizing hormone (LH). This is Secretoglobin family 3A member 2 (Scgb3a2) from Mus musculus (Mouse).